We begin with the raw amino-acid sequence, 59 residues long: Large ribosomal subunit protein bL32 (59 aa).

A disordered region spans residues 1 to 59; it reads MAVQQNKKSPSKRGMHRSHDALTAPALSVDSTTGEVHRPHHISPNGMYRGRKVVKVKGE. Residues 49 to 59 are compositionally biased toward basic residues; that stretch reads RGRKVVKVKGE.

The protein belongs to the bacterial ribosomal protein bL32 family.

The chain is Large ribosomal subunit protein bL32 (rpmF) from Neisseria meningitidis serogroup A / serotype 4A (strain DSM 15465 / Z2491).